Consider the following 392-residue polypeptide: Meiotically up-regulated gene 11 protein (392 aa).

It localises to the cytoplasm. Its subcellular location is the nucleus. Its function is as follows. Has a role in meiosis. The polypeptide is Meiotically up-regulated gene 11 protein (mug11) (Schizosaccharomyces pombe (strain 972 / ATCC 24843) (Fission yeast)).